The sequence spans 96 residues: Small ribosomal subunit protein bS6 (96 aa).

It belongs to the bacterial ribosomal protein bS6 family.

Binds together with bS18 to 16S ribosomal RNA. The protein is Small ribosomal subunit protein bS6 of Bacillus cereus (strain G9842).